We begin with the raw amino-acid sequence, 335 residues long: Glucokinase (335 aa).

11–16 (ADIGGT) is an ATP binding site.

The protein belongs to the bacterial glucokinase family.

The protein resides in the cytoplasm. The catalysed reaction is D-glucose + ATP = D-glucose 6-phosphate + ADP + H(+). This Xanthomonas oryzae pv. oryzae (strain MAFF 311018) protein is Glucokinase.